A 192-amino-acid chain; its full sequence is NADH-quinone oxidoreductase subunit B (192 aa).

The [4Fe-4S] cluster site is built by Cys-71, Cys-72, Cys-136, and Cys-166.

Belongs to the complex I 20 kDa subunit family. In terms of assembly, NDH-1 is composed of 14 different subunits. Subunits NuoB, C, D, E, F, and G constitute the peripheral sector of the complex. [4Fe-4S] cluster is required as a cofactor.

The protein resides in the cell inner membrane. The enzyme catalyses a quinone + NADH + 5 H(+)(in) = a quinol + NAD(+) + 4 H(+)(out). Its function is as follows. NDH-1 shuttles electrons from NADH, via FMN and iron-sulfur (Fe-S) centers, to quinones in the respiratory chain. The immediate electron acceptor for the enzyme in this species is believed to be ubiquinone. Couples the redox reaction to proton translocation (for every two electrons transferred, four hydrogen ions are translocated across the cytoplasmic membrane), and thus conserves the redox energy in a proton gradient. This chain is NADH-quinone oxidoreductase subunit B, found in Sinorhizobium medicae (strain WSM419) (Ensifer medicae).